The chain runs to 138 residues: MRTLWIVAVWLTGVEGDLSQFGDMINKKTGTFGLFSYIYYGCYCGWGGKGKPQDATDRCCFVHDCCYGSVNGCDPKLSTYSYSFQNGDIVCGDDDPCLRAVCECDRVAAICSGENMNTYDKKYMLYSLFDCKEESEKC.

The first 16 residues, 1-16, serve as a signal peptide directing secretion; it reads MRTLWIVAVWLTGVEG. 7 disulfide bridges follow: Cys-42-Cys-131, Cys-44-Cys-60, Cys-59-Cys-111, Cys-65-Cys-138, Cys-66-Cys-104, Cys-73-Cys-97, and Cys-91-Cys-102. Ca(2+)-binding residues include Tyr-43, Gly-45, and Gly-47. Residue His-63 is part of the active site. Asp-64 provides a ligand contact to Ca(2+). Residue Asp-105 is part of the active site.

In terms of assembly, monomer. It depends on Ca(2+) as a cofactor. Expressed by the venom gland.

The protein resides in the secreted. The enzyme catalyses a 1,2-diacyl-sn-glycero-3-phosphocholine + H2O = a 1-acyl-sn-glycero-3-phosphocholine + a fatty acid + H(+). Its function is as follows. Snake venom phospholipase that inhibits ADP- and collagen-induced human platelet aggregation. This inhibition is completely inhibited by abolition of catalytic activity in case of collagen as inducer and partially inhibited in case of ADP as inducer. PLA2 catalyzes the calcium-dependent hydrolysis of the 2-acyl groups in 3-sn-phosphoglycerides. This Macrovipera lebetinus (Levantine viper) protein is Acidic phospholipase A2 2.